The sequence spans 390 residues: UDP-galactose translocator (390 aa).

Residues 1–24 (MAAVGVGGSTAAAGAGAVSSGALE) are disordered. 10 helical membrane passes run 3-23 (AVGV…SGAL), 37-57 (YISL…IRYA), 65-85 (FFAT…CLLL), 97-117 (LVLF…KLAV), 140-160 (TFQV…VLML), 169-189 (WASL…QAGG), 200-220 (GAGL…GVYF), 238-258 (LGLF…GTAV), 269-289 (PAVW…AVVV), and 315-335 (LFGF…IGAV). Positions 9 to 22 (STAAAGAGAVSSGA) are enriched in low complexity. Positions 356 to 390 (PCIHQQPPGQPPPPQLSSRGDLTTEPFLPKSVLVK) are disordered.

The protein belongs to the nucleotide-sugar transporter family. SLC35A subfamily. Interacts with SLC35A3; the interaction is reduced in the presence of SLC35A4. Found in a complex with SLC35A3 and SLC35A4.

The protein resides in the golgi apparatus membrane. It carries out the reaction UMP(out) + UDP-alpha-D-galactose(in) = UMP(in) + UDP-alpha-D-galactose(out). The catalysed reaction is UDP-N-acetyl-alpha-D-galactosamine(in) + UMP(out) = UDP-N-acetyl-alpha-D-galactosamine(out) + UMP(in). The enzyme catalyses UMP(out) + UDP-alpha-D-glucose(in) = UMP(in) + UDP-alpha-D-glucose(out). It catalyses the reaction UMP(out) + UDP-N-acetyl-alpha-D-glucosamine(in) = UMP(in) + UDP-N-acetyl-alpha-D-glucosamine(out). It carries out the reaction UDP-alpha-D-galactose(in) + AMP(out) = UDP-alpha-D-galactose(out) + AMP(in). The catalysed reaction is UDP-alpha-D-galactose(in) + CMP(out) = UDP-alpha-D-galactose(out) + CMP(in). The enzyme catalyses UDP-N-acetyl-alpha-D-galactosamine(out) + UDP-alpha-D-galactose(in) = UDP-N-acetyl-alpha-D-galactosamine(in) + UDP-alpha-D-galactose(out). It catalyses the reaction UDP-N-acetyl-alpha-D-glucosamine(out) + UDP-alpha-D-galactose(in) = UDP-N-acetyl-alpha-D-glucosamine(in) + UDP-alpha-D-galactose(out). It carries out the reaction UDP-alpha-D-galactose(in) + UDP-alpha-D-glucose(out) = UDP-alpha-D-galactose(out) + UDP-alpha-D-glucose(in). The catalysed reaction is UMP(out) + CMP(in) = UMP(in) + CMP(out). The enzyme catalyses UMP(out) + AMP(in) = UMP(in) + AMP(out). Its function is as follows. Transports uridine diphosphate galactose (UDP-galactose) from the cytosol into the Golgi apparatus. It functions as an antiporter that exchanges UDP-galactose for UMP. It is also able to exchange UDP-galactose for AMP and CMP, and to transport UDP-N-acetylgalactosamine (UDP-GalNAc) and other nucleotide sugars. As a provider of UDP-galactose to galactosyltransferases present in the Golgi apparatus, it is necessary for globotriaosylceramide/globoside (Gb3Cer) synthesis from lactosylceramide. The protein is UDP-galactose translocator of Mus musculus (Mouse).